Here is a 292-residue protein sequence, read N- to C-terminus: Cyclin-dependent kinase 5 (292 aa).

The 283-residue stretch at Y4–F286 folds into the Protein kinase domain. ATP contacts are provided by residues I10–V18 and K33. Position 15 is a phosphotyrosine; by ABL1, EPHA4 and FYN (Y15). A Phosphothreonine modification is found at T17. At K56 the chain carries N6-acetyllysine. A Phosphoserine modification is found at S72. Residue D126 is the Proton acceptor of the active site. S159 carries the post-translational modification Phosphoserine.

The protein belongs to the protein kinase superfamily. CMGC Ser/Thr protein kinase family. CDC2/CDKX subfamily. Heterodimer composed of a catalytic subunit CDK5 and a regulatory subunit CDK5R1 (p25) and macromolecular complex composed of at least CDK5, CDK5R1 (p35) and CDK5RAP1 or CDK5RAP2 or CDK5RAP3. Only the heterodimer shows kinase activity. Under neurotoxic stress and neuronal injury conditions, p35 is cleaved by calpain to generate p25 that hyperactivates CDK5, that becomes functionally disabled and often toxic. Found in a trimolecular complex with CABLES1 and ABL1. Interacts with CABLES1 and CABLES2. Interacts with AATK and GSTP1. Binds to HDAC1 when in complex with p25. Interaction with myristoylation p35 promotes CDK5 association with membranes. Both isoforms 1 and 2 interacts with beta-catenin/CTNNB1. Interacts with delta-catenin/CTNND2 and APEX1. Interacts with P53/TP53 in neurons. Interacts with EPHA4; may mediate the activation of NGEF by EPHA4. Interacts with PTK2/FAK1. The complex p35/CDK5 interacts with CLOCK. Interacts with HTR6. Phosphorylation on Tyr-15 by ABL1 and FYN, and on Ser-159 by casein kinase 1 promotes kinase activity. By contrast, phosphorylation at Thr-14 inhibits activity. In terms of processing, phosphorylation at Ser-159 is essential for maximal catalytic activity. As to expression, ubiquitously expressed. Accumulates in cortical neurons (at protein level). In terms of tissue distribution, expressed in the testis, skeletal muscle, colon, bone marrow and ovary.

The protein localises to the cytoplasm. It localises to the nucleus. Its subcellular location is the cell membrane. The protein resides in the perikaryon. It is found in the cell projection. The protein localises to the lamellipodium. It localises to the growth cone. Its subcellular location is the postsynaptic density. The protein resides in the synapse. It carries out the reaction L-seryl-[protein] + ATP = O-phospho-L-seryl-[protein] + ADP + H(+). The catalysed reaction is L-threonyl-[protein] + ATP = O-phospho-L-threonyl-[protein] + ADP + H(+). Its activity is regulated as follows. Inhibited by 2-(1-ethyl-2-hydroxyethylamino)-6-benzylamino-9-isopropylpurine (roscovitine), 1-isopropyl-4-aminobenzyl-6-ether-linked benzimidazoles, resveratrol, AT-7519 and olomoucine. Activated by CDK5R1 (p35) and CDK5R2 (p39) during the development of the nervous system; degradation of CDK5R1 (p35) and CDK5R2 (p39) by proteasome result in down regulation of kinase activity, during this process, CDK5 phosphorylates p35 and induces its ubiquitination and subsequent degradation. Kinase activity is mainly determined by the amount of p35 available and subcellular location; reversible association to plasma membrane inhibits activity. Long-term inactivation as well as CDK5R1 (p25)-mediated hyperactivation of CDK5 triggers cell death. The pro-death activity of hyperactivated CDK5 is suppressed by membrane association of CDK5, via myristoylation of p35. Brain-derived neurotrophic factor, glial-derived neurotrophic factor, nerve growth factor (NGF), retinoic acid, laminin and neuregulin promote activity. Neurotoxicity enhances nuclear activity, thus leading to MEF2 phosphorylation and inhibition prior to apoptosis of cortical neurons. Repression by GSTP1 via p25/p35 translocation prevents neurodegeneration. In terms of biological role, proline-directed serine/threonine-protein kinase essential for neuronal cell cycle arrest and differentiation and may be involved in apoptotic cell death in neuronal diseases by triggering abortive cell cycle re-entry. Interacts with D1 and D3-type G1 cyclins. Phosphorylates SRC, NOS3, VIM/vimentin, p35/CDK5R1, MEF2A, SIPA1L1, SH3GLB1, PXN, PAK1, MCAM/MUC18, SEPT5, SYN1, DNM1, AMPH, SYNJ1, CDK16, RAC1, RHOA, CDC42, TONEBP/NFAT5, MAPT/TAU, MAP1B, histone H1, p53/TP53, HDAC1, APEX1, PTK2/FAK1, huntingtin/HTT, ATM, MAP2, NEFH and NEFM. Regulates several neuronal development and physiological processes including neuronal survival, migration and differentiation, axonal and neurite growth, synaptogenesis, oligodendrocyte differentiation, synaptic plasticity and neurotransmission, by phosphorylating key proteins. Negatively regulates the CACNA1B/CAV2.2 -mediated Ca(2+) release probability at hippocampal neuronal soma and synaptic terminals. Activated by interaction with CDK5R1 (p35) and CDK5R2 (p39), especially in postmitotic neurons, and promotes CDK5R1 (p35) expression in an autostimulation loop. Phosphorylates many downstream substrates such as Rho and Ras family small GTPases (e.g. PAK1, RAC1, RHOA, CDC42) or microtubule-binding proteins (e.g. MAPT/TAU, MAP2, MAP1B), and modulates actin dynamics to regulate neurite growth and/or spine morphogenesis. Also phosphorylates exocytosis associated proteins such as MCAM/MUC18, SEPT5, SYN1, and CDK16/PCTAIRE1 as well as endocytosis associated proteins such as DNM1, AMPH and SYNJ1 at synaptic terminals. In the mature central nervous system (CNS), regulates neurotransmitter movements by phosphorylating substrates associated with neurotransmitter release and synapse plasticity; synaptic vesicle exocytosis, vesicles fusion with the presynaptic membrane, and endocytosis. Promotes cell survival by activating anti-apoptotic proteins BCL2 and STAT3, and negatively regulating of JNK3/MAPK10 activity. Phosphorylation of p53/TP53 in response to genotoxic and oxidative stresses enhances its stabilization by preventing ubiquitin ligase-mediated proteasomal degradation, and induces transactivation of p53/TP53 target genes, thus regulating apoptosis. Phosphorylation of p35/CDK5R1 enhances its stabilization by preventing calpain-mediated proteolysis producing p25/CDK5R1 and avoiding ubiquitin ligase-mediated proteasomal degradation. During aberrant cell-cycle activity and DNA damage, p25/CDK5 activity elicits cell-cycle activity and double-strand DNA breaks that precedes neuronal death by deregulating HDAC1. DNA damage triggered phosphorylation of huntingtin/HTT in nuclei of neurons protects neurons against polyglutamine expansion as well as DNA damage mediated toxicity. Phosphorylation of PXN reduces its interaction with PTK2/FAK1 in matrix-cell focal adhesions (MCFA) during oligodendrocytes (OLs) differentiation. Negative regulator of Wnt/beta-catenin signaling pathway. Activator of the GAIT (IFN-gamma-activated inhibitor of translation) pathway, which suppresses expression of a post-transcriptional regulon of proinflammatory genes in myeloid cells; phosphorylates the linker domain of glutamyl-prolyl tRNA synthetase (EPRS) in a IFN-gamma-dependent manner, the initial event in assembly of the GAIT complex. Phosphorylation of SH3GLB1 is required for autophagy induction in starved neurons. Phosphorylation of TONEBP/NFAT5 in response to osmotic stress mediates its rapid nuclear localization. MEF2 is inactivated by phosphorylation in nucleus in response to neurotoxin, thus leading to neuronal apoptosis. APEX1 AP-endodeoxyribonuclease is repressed by phosphorylation, resulting in accumulation of DNA damage and contributing to neuronal death. NOS3 phosphorylation down regulates NOS3-derived nitrite (NO) levels. SRC phosphorylation mediates its ubiquitin-dependent degradation and thus leads to cytoskeletal reorganization. May regulate endothelial cell migration and angiogenesis via the modulation of lamellipodia formation. Involved in dendritic spine morphogenesis by mediating the EFNA1-EPHA4 signaling. The complex p35/CDK5 participates in the regulation of the circadian clock by modulating the function of CLOCK protein: phosphorylates CLOCK at 'Thr-451' and 'Thr-461' and regulates the transcriptional activity of the CLOCK-BMAL1 heterodimer in association with altered stability and subcellular distribution. This chain is Cyclin-dependent kinase 5, found in Homo sapiens (Human).